The primary structure comprises 249 residues: ATP synthase subunit a (249 aa).

The next 6 helical transmembrane spans lie at 30–50 (QSPV…YVGM), 86–106 (FFPF…LGLL), 115–135 (HIAV…IVSL), 142–162 (FFAH…LVPI), 191–211 (MFAA…VLAV), and 218–238 (VALM…FAIL).

The protein belongs to the ATPase A chain family. In terms of assembly, F-type ATPases have 2 components, CF(1) - the catalytic core - and CF(0) - the membrane proton channel. CF(1) has five subunits: alpha(3), beta(3), gamma(1), delta(1), epsilon(1). CF(0) has three main subunits: a(1), b(2) and c(9-12). The alpha and beta chains form an alternating ring which encloses part of the gamma chain. CF(1) is attached to CF(0) by a central stalk formed by the gamma and epsilon chains, while a peripheral stalk is formed by the delta and b chains.

The protein resides in the cell inner membrane. Its function is as follows. Key component of the proton channel; it plays a direct role in the translocation of protons across the membrane. The protein is ATP synthase subunit a of Gluconacetobacter diazotrophicus (strain ATCC 49037 / DSM 5601 / CCUG 37298 / CIP 103539 / LMG 7603 / PAl5).